The sequence spans 143 residues: Cofilin (143 aa).

One can recognise an ADF-H domain in the interval 5 to 137; that stretch reads GVAVADESLT…AYESVLEKVS (133 aa).

Belongs to the actin-binding proteins ADF family.

It is found in the cytoplasm. Its subcellular location is the cytoskeleton. It localises to the nucleus matrix. Functionally, controls reversibly actin polymerization and depolymerization in a pH-sensitive manner. It has the ability to bind G- and F-actin in a 1:1 ratio of cofilin to actin. Binding to F-actin is regulated by tropomyosin. It is the major component of intranuclear and cytoplasmic actin rods. Required for accumulation of actin at the cell division site via depolymerizing actin at the cell ends. In association with myosin II has a role in the assembly of the contractile ring via severing actin filaments. Involved in the maintenance of the contractile ring once formed. In association with profilin and capping protein, has a role in the mitotic reorganization of the actin cytoskeleton. The chain is Cofilin (COF1) from Eremothecium gossypii (strain ATCC 10895 / CBS 109.51 / FGSC 9923 / NRRL Y-1056) (Yeast).